A 620-amino-acid polypeptide reads, in one-letter code: Protein phosphatase 2C-like domain-containing protein 1 (620 aa).

A PPM-type phosphatase domain is found at 173 to 611 (GIAICSNNNS…DSITVMVMFL (439 aa)).

This sequence belongs to the PP2C family.

This Mus musculus (Mouse) protein is Protein phosphatase 2C-like domain-containing protein 1 (Pp2d1).